The following is an 86-amino-acid chain: Small ribosomal subunit protein bS18 (86 aa).

It belongs to the bacterial ribosomal protein bS18 family. Part of the 30S ribosomal subunit. Forms a tight heterodimer with protein bS6.

Its function is as follows. Binds as a heterodimer with protein bS6 to the central domain of the 16S rRNA, where it helps stabilize the platform of the 30S subunit. The sequence is that of Small ribosomal subunit protein bS18 from Maridesulfovibrio salexigens (strain ATCC 14822 / DSM 2638 / NCIMB 8403 / VKM B-1763) (Desulfovibrio salexigens).